A 479-amino-acid polypeptide reads, in one-letter code: Kynurenine 3-monooxygenase (479 aa).

FAD-binding positions include valine 19, 37–40 (YEAR), and alanine 57. Positions 85 and 99 each coordinate L-kynurenine. Residues arginine 111, leucine 136, threonine 172, aspartate 304, and 317–318 (MN) contribute to the FAD site. Positions 363 and 398 each coordinate L-kynurenine. The next 2 helical transmembrane spans lie at 385–404 (FLHAIMPSTFIPLYTMVAFT) and 425–445 (GLFVLGSLIAIGGTYLLVHHL).

It belongs to the aromatic-ring hydroxylase family. KMO subfamily. The cofactor is FAD. As to expression, expressed by organs containing secondary lymphoid tissue, such as the lung, spleen, mesenteric lymph node, thymus and peripheral lymph nodes.

The protein localises to the mitochondrion outer membrane. It carries out the reaction L-kynurenine + NADPH + O2 + H(+) = 3-hydroxy-L-kynurenine + NADP(+) + H2O. The protein operates within cofactor biosynthesis; NAD(+) biosynthesis; quinolinate from L-kynurenine: step 1/3. Catalyzes the hydroxylation of L-kynurenine (L-Kyn) to form 3-hydroxy-L-kynurenine (L-3OHKyn). Required for synthesis of quinolinic acid, a neurotoxic NMDA receptor antagonist and potential endogenous inhibitor of NMDA receptor signaling in axonal targeting, synaptogenesis and apoptosis during brain development. Quinolinic acid may also affect NMDA receptor signaling in pancreatic beta cells, osteoblasts, myocardial cells, and the gastrointestinal tract. This is Kynurenine 3-monooxygenase from Mus musculus (Mouse).